The sequence spans 220 residues: Large ribosomal subunit protein uL1 (220 aa).

It belongs to the universal ribosomal protein uL1 family. Part of the 50S ribosomal subunit.

Its function is as follows. Binds directly to 23S rRNA. The L1 stalk is quite mobile in the ribosome, and is involved in E site tRNA release. Protein L1 is also a translational repressor protein, it controls the translation of the L11 operon by binding to its mRNA. The chain is Large ribosomal subunit protein uL1 from Ehrlichia canis (strain Jake).